Consider the following 607-residue polypeptide: UvrABC system protein C (607 aa).

The 79-residue stretch at 15–93 (SEPGVYCMLD…IKKYQPRYNI (79 aa)) folds into the GIY-YIG domain. Positions 202–237 (HEVIADLIKKMEAASQQLNFELAAKVRDQIMLLRKM) constitute a UVR domain.

Belongs to the UvrC family. Interacts with UvrB in an incision complex.

It localises to the cytoplasm. Its function is as follows. The UvrABC repair system catalyzes the recognition and processing of DNA lesions. UvrC both incises the 5' and 3' sides of the lesion. The N-terminal half is responsible for the 3' incision and the C-terminal half is responsible for the 5' incision. The sequence is that of UvrABC system protein C from Pseudoalteromonas translucida (strain TAC 125).